An 848-amino-acid polypeptide reads, in one-letter code: Protein translocase subunit SecA (848 aa).

Residues Gln86, 104 to 108 (GEGKT), and Asp508 contribute to the ATP site. Zn(2+)-binding residues include Cys833, Cys835, Cys844, and Cys845.

The protein belongs to the SecA family. In terms of assembly, monomer and homodimer. Part of the essential Sec protein translocation apparatus which comprises SecA, SecYEG and auxiliary proteins SecDF. Other proteins may also be involved. The cofactor is Zn(2+).

It is found in the cell membrane. The protein resides in the cytoplasm. It carries out the reaction ATP + H2O + cellular proteinSide 1 = ADP + phosphate + cellular proteinSide 2.. Part of the Sec protein translocase complex. Interacts with the SecYEG preprotein conducting channel. Has a central role in coupling the hydrolysis of ATP to the transfer of proteins into and across the cell membrane, serving as an ATP-driven molecular motor driving the stepwise translocation of polypeptide chains across the membrane. This Caldicellulosiruptor saccharolyticus (strain ATCC 43494 / DSM 8903 / Tp8T 6331) protein is Protein translocase subunit SecA.